The following is a 245-amino-acid chain: Carbohydrate deacetylase (245 aa).

The Mg(2+) site is built by histidine 59 and histidine 125.

The protein belongs to the YdjC deacetylase family. As to quaternary structure, homodimer. Mg(2+) serves as cofactor.

Probably catalyzes the deacetylation of acetylated carbohydrates an important step in the degradation of oligosaccharides. The polypeptide is Carbohydrate deacetylase (Listeria monocytogenes serotype 4b (strain CLIP80459)).